Here is a 149-residue protein sequence, read N- to C-terminus: Large ribosomal subunit protein bL9 (149 aa).

It belongs to the bacterial ribosomal protein bL9 family.

Its function is as follows. Binds to the 23S rRNA. The polypeptide is Large ribosomal subunit protein bL9 (Geobacillus thermodenitrificans (strain NG80-2)).